A 301-amino-acid chain; its full sequence is Eukaryotic translation initiation factor 3 subunit F (301 aa).

Residues 32–169 form the MPN domain; the sequence is VHVHPVALFS…IKSYISSPLG (138 aa).

It belongs to the eIF-3 subunit F family. As to quaternary structure, component of the eukaryotic translation initiation factor 3 (eIF-3) complex.

Its subcellular location is the cytoplasm. Component of the eukaryotic translation initiation factor 3 (eIF-3) complex, which is involved in protein synthesis of a specialized repertoire of mRNAs and, together with other initiation factors, stimulates binding of mRNA and methionyl-tRNAi to the 40S ribosome. The eIF-3 complex specifically targets and initiates translation of a subset of mRNAs involved in cell proliferation. The protein is Eukaryotic translation initiation factor 3 subunit F of Mycosarcoma maydis (Corn smut fungus).